Reading from the N-terminus, the 453-residue chain is Flavonol-3-O-rhamnosyltransferase (453 aa).

His-24 (proton acceptor) is an active-site residue. Residue His-24 participates in an anthocyanidin binding. The active-site Charge relay is the Asp-119. His-150 serves as a coordination point for an anthocyanidin. UDP-beta-L-rhamnose contacts are provided by Thr-280, Ala-333, His-350, Asn-354, Ser-355, and Glu-358. An an anthocyanidin-binding site is contributed by Ala-373.

This sequence belongs to the UDP-glycosyltransferase family. Expressed in leaves, flowers, siliques, and stems. Expressed in the shoot apex.

The enzyme catalyses kaempferol + UDP-beta-L-rhamnose = kaempferol 3-O-alpha-L-rhamnoside + UDP + H(+). The catalysed reaction is UDP-beta-L-rhamnose + quercetin = quercitrin + UDP + H(+). It participates in flavonoid metabolism. In terms of biological role, flavonol 3-O-rhamnosyltransferase that catalyzes the transfer of rhamnose from UDP-rhamnose to the 3-OH position of kaempferol and quercetin. Possesses low quercetin 3-O-glucosyltransferase activity in vitro. The chain is Flavonol-3-O-rhamnosyltransferase from Arabidopsis thaliana (Mouse-ear cress).